A 111-amino-acid polypeptide reads, in one-letter code: DNA-directed RNA polymerase subunit Rpo11 (111 aa).

It belongs to the archaeal Rpo11/eukaryotic RPB11/RPC19 RNA polymerase subunit family. As to quaternary structure, part of the RNA polymerase complex.

It localises to the cytoplasm. It carries out the reaction RNA(n) + a ribonucleoside 5'-triphosphate = RNA(n+1) + diphosphate. Its function is as follows. DNA-dependent RNA polymerase (RNAP) catalyzes the transcription of DNA into RNA using the four ribonucleoside triphosphates as substrates. This chain is DNA-directed RNA polymerase subunit Rpo11, found in Thermoplasma acidophilum (strain ATCC 25905 / DSM 1728 / JCM 9062 / NBRC 15155 / AMRC-C165).